The sequence spans 162 residues: uncharacterized protein (162 aa).

Residues 6–99 (LDDLDRAILK…YVTKTLSGFP (94 aa)) form the HTH asnC-type domain. Positions 25 to 44 (IAEISNQLKKPESTVHFRIK) form a DNA-binding region, H-T-H motif.

This is an uncharacterized protein from Pyrococcus horikoshii (strain ATCC 700860 / DSM 12428 / JCM 9974 / NBRC 100139 / OT-3).